We begin with the raw amino-acid sequence, 376 residues long: MEGGRNCVMTVQQWQPEYNDMNQIRAIFSLLYLLVWVGAIVGNTLVLYVLTFNQVSLSVRTVFVGCLAGSDLLMCLFSLPITAISIFSRVWVFPAIFCKLIGVFQGGTIFVSSFTLTVIALDRCVLILRPNQEIVNFPRAVFIVFCIWLLGYSLALPVGIYSDIAVYDEICGTFCEENWPDFNPDTGRSGIRRAYGLSVLVLQFGIPALISSICYWMISRVMSDQLARRRGHNIRPESETKLVNRKTRANRMMIVMVVGFVLAWMPFNAVNLYRDLFGISKWYSTVFALCHVCAMCSAVLNPIIYSWFNPQFRQSITTLFKGTDEARLIKKKPQSTSKMVSYPTNFSEIRKETEIASTKTKITIAENDYRAGDQLL.

Residues M1 to S29 are Extracellular-facing. The helical transmembrane segment at L30–L50 threads the bilayer. Residues T51 to C66 are Cytoplasmic-facing. The chain crosses the membrane as a helical span at residues L67–F87. Residues S88 to R89 lie on the Extracellular side of the membrane. A helical membrane pass occupies residues V90 to F110. The cysteines at positions 98 and 175 are disulfide-linked. At V111–R139 the chain is on the cytoplasmic side. A helical membrane pass occupies residues A140–I160. Residues Y161 to L197 lie on the Extracellular side of the membrane. The helical transmembrane segment at S198–I218 threads the bilayer. The Cytoplasmic segment spans residues S219 to R251. Residues M252–L272 traverse the membrane as a helical segment. At Y273–S284 the chain is on the extracellular side. The chain crosses the membrane as a helical span at residues T285–Y305. The Cytoplasmic portion of the chain corresponds to S306–L376.

It belongs to the G-protein coupled receptor 1 family.

The protein resides in the cell membrane. Its function is as follows. G-protein coupled receptor for flp-15 neuropeptides. Receptor activation assays suggest binding to predicted flp-15 peptides, GGPQGPLRF-NH2 and RGPSGPLRF-NH2. Likely involved in Gi/Go-coupled signaling pathways. The polypeptide is Neuropeptide receptor 3 (Caenorhabditis elegans).